A 106-amino-acid chain; its full sequence is Large ribosomal subunit protein bL21 (106 aa).

The protein belongs to the bacterial ribosomal protein bL21 family. As to quaternary structure, part of the 50S ribosomal subunit. Contacts protein L20.

In terms of biological role, this protein binds to 23S rRNA in the presence of protein L20. The protein is Large ribosomal subunit protein bL21 of Chlamydia pneumoniae (Chlamydophila pneumoniae).